Here is a 446-residue protein sequence, read N- to C-terminus: Adenylosuccinate synthetase (446 aa).

GTP is bound by residues 21–27 and 49–51; these read GDEGKGK and GHT. Residue aspartate 22 is the Proton acceptor of the active site. Mg(2+)-binding residues include aspartate 22 and glycine 49. IMP is bound by residues 22-25, 47-50, threonine 141, arginine 155, glutamine 236, threonine 251, and arginine 319; these read DEGK and NAGH. Catalysis depends on histidine 50, which acts as the Proton donor. Position 315–321 (315–321) interacts with substrate; sequence VTTGRSR. GTP contacts are provided by residues arginine 321, 347 to 349, and 429 to 431; these read KLD and STS.

The protein belongs to the adenylosuccinate synthetase family. As to quaternary structure, homodimer. Requires Mg(2+) as cofactor.

It localises to the cytoplasm. It carries out the reaction IMP + L-aspartate + GTP = N(6)-(1,2-dicarboxyethyl)-AMP + GDP + phosphate + 2 H(+). The protein operates within purine metabolism; AMP biosynthesis via de novo pathway; AMP from IMP: step 1/2. Its function is as follows. Plays an important role in the de novo pathway of purine nucleotide biosynthesis. Catalyzes the first committed step in the biosynthesis of AMP from IMP. The protein is Adenylosuccinate synthetase of Polaromonas naphthalenivorans (strain CJ2).